The sequence spans 219 residues: Probable GTP-binding protein EngB (219 aa).

An EngB-type G domain is found at 24-207 (VQPEIAFAGR…HELIESWLRP (184 aa)). GTP contacts are provided by residues 32–39 (GRSNAGKS), 59–63 (GRTQH), 81–84 (DLPG), 148–151 (TKCD), and 186–188 (FSA). 2 residues coordinate Mg(2+): S39 and T61.

This sequence belongs to the TRAFAC class TrmE-Era-EngA-EngB-Septin-like GTPase superfamily. EngB GTPase family. Mg(2+) is required as a cofactor.

Necessary for normal cell division and for the maintenance of normal septation. In Burkholderia ambifaria (strain ATCC BAA-244 / DSM 16087 / CCUG 44356 / LMG 19182 / AMMD) (Burkholderia cepacia (strain AMMD)), this protein is Probable GTP-binding protein EngB.